Here is a 349-residue protein sequence, read N- to C-terminus: Methylthioribose-1-phosphate isomerase (349 aa).

Substrate-binding positions include arginine 51 to alanine 53, arginine 94, and glutamine 199. Aspartate 240 acts as the Proton donor in catalysis. Position 250-251 (asparagine 250–lysine 251) interacts with substrate.

This sequence belongs to the eIF-2B alpha/beta/delta subunits family. MtnA subfamily. As to quaternary structure, homodimer.

The catalysed reaction is 5-(methylsulfanyl)-alpha-D-ribose 1-phosphate = 5-(methylsulfanyl)-D-ribulose 1-phosphate. The protein operates within amino-acid biosynthesis; L-methionine biosynthesis via salvage pathway; L-methionine from S-methyl-5-thio-alpha-D-ribose 1-phosphate: step 1/6. Its function is as follows. Catalyzes the interconversion of methylthioribose-1-phosphate (MTR-1-P) into methylthioribulose-1-phosphate (MTRu-1-P). This chain is Methylthioribose-1-phosphate isomerase, found in Bacillus cytotoxicus (strain DSM 22905 / CIP 110041 / 391-98 / NVH 391-98).